The sequence spans 644 residues: Replication protein E1 (644 aa).

Residues 86–88 carry the Nuclear localization signal motif; it reads KRK. Positions 146-177 are disordered; the sequence is QVESQNGDADLNDSESSGVGASSDVSSETDVD. Low complexity predominate over residues 159 to 173; that stretch reads SESSGVGASSDVSSE. The interval 179-345 is DNA-binding region; the sequence is CNTVPLQNIS…LTVLQHSFND (167 aa). Residues 444–594 form the SF3 helicase domain; that stretch reads IEFTAFLVAF…FPFDANGNPV (151 aa). 470-477 is a binding site for ATP; sequence GPANTGKS. K551 participates in a covalent cross-link: Glycyl lysine isopeptide (Lys-Gly) (interchain with G-Cter in SUMO).

This sequence belongs to the papillomaviridae E1 protein family. As to quaternary structure, can form hexamers. Interacts with E2 protein; this interaction increases E1 DNA binding specificity. Interacts with host DNA polymerase subunit POLA2. Interacts with host single stranded DNA-binding protein RPA1. Interacts with host TOP1; this interaction stimulates the enzymatic activity of TOP1. Phosphorylated. In terms of processing, sumoylated.

It is found in the host nucleus. The enzyme catalyses Couples ATP hydrolysis with the unwinding of duplex DNA by translocating in the 3'-5' direction.. It carries out the reaction ATP + H2O = ADP + phosphate + H(+). ATP-dependent DNA 3'-5' helicase required for initiation of viral DNA replication. It forms a complex with the viral E2 protein. The E1-E2 complex binds to the replication origin which contains binding sites for both proteins. During the initial step, a dimer of E1 interacts with a dimer of protein E2 leading to a complex that binds the viral origin of replication with high specificity. Then, a second dimer of E1 displaces the E2 dimer in an ATP-dependent manner to form the E1 tetramer. Following this, two E1 monomers are added to each half of the site, which results in the formation of two E1 trimers on the viral ori. Subsequently, two hexamers will be created. The double hexamer acts as a bi-directional helicase machinery and unwinds the viral DNA and then recruits the host DNA polymerase to start replication. The chain is Replication protein E1 from Homo sapiens (Human).